The primary structure comprises 267 residues: tRNA pseudouridine synthase A (267 aa).

Residue aspartate 53 is the Nucleophile of the active site. Tyrosine 114 lines the substrate pocket.

The protein belongs to the tRNA pseudouridine synthase TruA family. Homodimer.

It carries out the reaction uridine(38/39/40) in tRNA = pseudouridine(38/39/40) in tRNA. Functionally, formation of pseudouridine at positions 38, 39 and 40 in the anticodon stem and loop of transfer RNAs. The protein is tRNA pseudouridine synthase A of Chlamydia muridarum (strain MoPn / Nigg).